Here is a 21-residue protein sequence, read N- to C-terminus: Chlorophyllase type 2 (21 aa).

The protein belongs to the AB hydrolase superfamily. Lipase family.

The enzyme catalyses a chlorophyll + H2O = a chlorophyllide + phytol + H(+). Its pathway is porphyrin-containing compound metabolism; chlorophyll degradation. Catalyzes the hydrolysis of ester bond in chlorophyll to yield chlorophyllide and phytol. This Chenopodium album (Fat hen) protein is Chlorophyllase type 2.